The chain runs to 338 residues: Eukaryotic translation initiation factor 3 subunit H (338 aa).

The region spanning Val-22–Ala-154 is the MPN domain.

It belongs to the eIF-3 subunit H family. In terms of assembly, component of the eukaryotic translation initiation factor 3 (eIF-3) complex. The eIF-3 complex interacts with pix. Interacts with mxt.

It localises to the cytoplasm. Component of the eukaryotic translation initiation factor 3 (eIF-3) complex, which is involved in protein synthesis of a specialized repertoire of mRNAs and, together with other initiation factors, stimulates binding of mRNA and methionyl-tRNAi to the 40S ribosome. The eIF-3 complex specifically targets and initiates translation of a subset of mRNAs involved in cell proliferation. This is Eukaryotic translation initiation factor 3 subunit H from Drosophila erecta (Fruit fly).